A 689-amino-acid polypeptide reads, in one-letter code: Solute carrier family 22 member 23 (689 aa).

Disordered regions lie at residues 1–55 and 162–188; these read MAID…PLPA and TASWGTTSNRSNSSDTPPLPSPPGKGN. N24 carries N-linked (GlcNAc...) asparagine glycosylation. Residues 165 to 177 show a composition bias toward polar residues; that stretch reads WGTTSNRSNSSDT. Helical transmembrane passes span 229-249 and 253-273; these read FSLLVGLIFGYLITGCIADWV and PVLLFSTIFILIFGLTVALSV. N274 is a glycosylation site (N-linked (GlcNAc...) asparagine). A run of 8 helical transmembrane segments spans residues 283–303, 310–330, 339–359, 466–486, 489–509, 541–561, 572–592, and 601–621; these read FFEGFCLAGIILTLYALRIEL, FIITMVASFVAMAGQFLMPGL, VLQALIICPFLLMLLYWSIFP, TMASIALASCLAMCLVVKFLG, GGLLLFMILTALASLLQLGLL, IAFSIVGMFASHAVGSLSVFF, CGGLGLVLASAGFGMLTAPII, and FLHHIIFACCTLICIICILLL.

The protein belongs to the major facilitator (TC 2.A.1) superfamily. Organic cation transporter (TC 2.A.1.19) family.

It is found in the membrane. In Mus musculus (Mouse), this protein is Solute carrier family 22 member 23 (Slc22a23).